Consider the following 470-residue polypeptide: MNPNKKIITIGSISLGLVVFNVLLHIVSIIVTVLVLGKGEKNGSCNETVVREYNETVKVEKVIQWHNTSVIEHIPYWNGGTYMNNTEAICDVKGFAPFSKDNGIRIGSRGHVFVIREPFVSCSPKECRTFFLTQGSLLNDKHSNGTVKDRSPFRTLMSVEVGQSPNVYQARFEAVAWSATACHDGKKWMTIGVTGPDSKAVAVIHYGGVPTDVINSWAGDILRTQESSCTCIQGDCYWVMTDGPANRQAQYRIYKANQGRIIGQIDVSFNGGHIEECSCYPNDGKVECVCRDNWTGTNRPILVISPDLSYRVGYLCAGLPSDTPRGVDAQFTGSCTSPMGNQGYGVKGFGFRQGSDVWMGRTISRTSRSGFEILRIKNGWTQTSKEQVGRQVVVDNLNWSGYSGSFTLPVEMSGRDCLVPCFWVEMIRGKPEEKTIWTSSSSIVMCGVDYKVADWTWHDGAILPFDIDKM.

The Intravirion segment spans residues 1-14; sequence MNPNKKIITIGSIS. An involved in apical transport and lipid raft association region spans residues 11–32; sequence GSISLGLVVFNVLLHIVSIIVT. Residues 15–35 traverse the membrane as a helical segment; it reads LGLVVFNVLLHIVSIIVTVLV. A hypervariable stalk region region spans residues 32 to 86; that stretch reads TVLVLGKGEKNGSCNETVVREYNETVKVEKVIQWHNTSVIEHIPYWNGGTYMNNT. Residues 36–470 are Virion surface-facing; sequence LGKGEKNGSC…AILPFDIDKM (435 aa). Asparagine 42, asparagine 46, asparagine 54, asparagine 67, and asparagine 84 each carry an N-linked (GlcNAc...) asparagine; by host glycan. Residues 89 to 470 are head of neuraminidase; the sequence is ICDVKGFAPF…AILPFDIDKM (382 aa). Disulfide bonds link cysteine 90/cysteine 417, cysteine 122/cysteine 127, cysteine 182/cysteine 229, cysteine 231/cysteine 236, cysteine 277/cysteine 290, cysteine 279/cysteine 288, cysteine 316/cysteine 335, and cysteine 421/cysteine 446. Arginine 116 contacts substrate. N-linked (GlcNAc...) asparagine; by host glycosylation occurs at asparagine 144. Aspartate 149 serves as the catalytic Proton donor/acceptor. Arginine 150 serves as a coordination point for substrate. 275–276 lines the substrate pocket; it reads EE. Arginine 291 provides a ligand contact to substrate. Aspartate 292 is a Ca(2+) binding site. Residue asparagine 293 is glycosylated (N-linked (GlcNAc...) asparagine; by host). Residues glycine 296 and aspartate 322 each contribute to the Ca(2+) site. Substrate is bound at residue arginine 368. N-linked (GlcNAc...) asparagine; by host glycosylation is present at asparagine 398. The active-site Nucleophile is tyrosine 402.

The protein belongs to the glycosyl hydrolase 34 family. As to quaternary structure, homotetramer. The cofactor is Ca(2+). In terms of processing, N-glycosylated.

The protein localises to the virion membrane. It is found in the host apical cell membrane. It carries out the reaction Hydrolysis of alpha-(2-&gt;3)-, alpha-(2-&gt;6)-, alpha-(2-&gt;8)- glycosidic linkages of terminal sialic acid residues in oligosaccharides, glycoproteins, glycolipids, colominic acid and synthetic substrates.. Its activity is regulated as follows. Inhibited by the neuraminidase inhibitors zanamivir (Relenza) and oseltamivir (Tamiflu). These drugs interfere with the release of progeny virus from infected cells and are effective against all influenza strains. Resistance to neuraminidase inhibitors is quite rare. Its function is as follows. Catalyzes the removal of terminal sialic acid residues from viral and cellular glycoconjugates. Cleaves off the terminal sialic acids on the glycosylated HA during virus budding to facilitate virus release. Additionally helps virus spread through the circulation by further removing sialic acids from the cell surface. These cleavages prevent self-aggregation and ensure the efficient spread of the progeny virus from cell to cell. Otherwise, infection would be limited to one round of replication. Described as a receptor-destroying enzyme because it cleaves a terminal sialic acid from the cellular receptors. May facilitate viral invasion of the upper airways by cleaving the sialic acid moieties on the mucin of the airway epithelial cells. Likely to plays a role in the budding process through its association with lipid rafts during intracellular transport. May additionally display a raft-association independent effect on budding. Plays a role in the determination of host range restriction on replication and virulence. Sialidase activity in late endosome/lysosome traffic seems to enhance virus replication. The chain is Neuraminidase from Influenza A virus (strain A/Quail/Italy/1117/1965 H10N8).